Reading from the N-terminus, the 30-residue chain is U5-ctenitoxin-Pk1b (30 aa).

2 cysteine pairs are disulfide-bonded: cysteine 6-cysteine 23 and cysteine 13-cysteine 29.

This sequence belongs to the neurotoxin 04 (omega-agtx) family. 02 (Tx1) subfamily. As to expression, expressed by the venom gland.

It localises to the secreted. Its function is as follows. Lethal neurotoxin. Causes spastic paralysis and death in mice in 4-6 minutes after intracerebroventricular injection at dose levels of 1.5 ug per mouse. This chain is U5-ctenitoxin-Pk1b, found in Phoneutria keyserlingi (Brazilian wandering spider).